A 67-amino-acid chain; its full sequence is uncharacterized protein (67 aa).

The next 2 membrane-spanning stretches (helical) occupy residues 8-28 and 41-61; these read MWFA…IYLS and ISSF…VVVF.

The protein resides in the cell membrane. This is an uncharacterized protein from Bacillus subtilis (strain 168).